The sequence spans 122 residues: MAAKPGELMGICSSYQAVMPHFVCLADEFPQPVRPAKLPKGRGRLRRPRQSRFKTQPVTFDEIQEVEEEGVSPMEEEKAKKSFLQSLECLRRSTQSLSLQREQLSSCKLRNSLDSSDSDSAL.

Thr-55 is subject to Phosphothreonine. 5 positions are modified to phosphoserine: Ser-72, Ser-86, Ser-96, Ser-112, and Ser-118.

It is found in the cytoplasm. This is an uncharacterized protein from Homo sapiens (Human).